Here is a 255-residue protein sequence, read N- to C-terminus: Glucanase inhibitor protein 4 (255 aa).

A signal peptide spans 1-21; that stretch reads MKSITTASFALILFGVGAASA. The Peptidase S1 domain occupies 29–255; it reads VLGGGAVPSG…ESLGMDQLGH (227 aa). A disulfide bridge connects residues cysteine 56 and cysteine 72. 4 N-linked (GlcNAc...) asparagine glycosylation sites follow: asparagine 90, asparagine 105, asparagine 110, and asparagine 160. Disulfide bonds link cysteine 180–cysteine 192 and cysteine 202–cysteine 235.

Belongs to the peptidase S1 family. Forms an apoplastic complex with host endoglucanases in tomato leaves during P.infestans infection.

It is found in the secreted. Its function is as follows. Secreted effector that suppresses host plant glucan elicitor-mediated defense responses. Targets host endoglucanases and inhibits the endoglucanase-mediated release of elicitor-active glucan oligosaccharides from P.infestans cell walls. The polypeptide is Glucanase inhibitor protein 4 (Phytophthora infestans (Potato late blight agent)).